A 236-amino-acid polypeptide reads, in one-letter code: Probable metal transport system ATP-binding protein TC_0697 (236 aa).

The ABC transporter domain occupies 5–236 (LILENVSFRY…FCCNTFGKCS (232 aa)). Residue 39 to 46 (GPNGGGKT) participates in ATP binding.

Belongs to the ABC transporter superfamily.

The protein resides in the cell inner membrane. Its function is as follows. Part of an ATP-driven transport system TC_0696/TC_0697/TC_0698 for a metal. Probably responsible for energy coupling to the transport system. The protein is Probable metal transport system ATP-binding protein TC_0697 of Chlamydia muridarum (strain MoPn / Nigg).